The sequence spans 285 residues: Release factor glutamine methyltransferase (285 aa).

Residues aspartate 143 and asparagine 189 each coordinate S-adenosyl-L-methionine. 189–192 contributes to the substrate binding site; the sequence is NPPY.

It belongs to the protein N5-glutamine methyltransferase family. PrmC subfamily.

It catalyses the reaction L-glutaminyl-[peptide chain release factor] + S-adenosyl-L-methionine = N(5)-methyl-L-glutaminyl-[peptide chain release factor] + S-adenosyl-L-homocysteine + H(+). Its function is as follows. Methylates the class 1 translation termination release factors RF1/PrfA and RF2/PrfB on the glutamine residue of the universally conserved GGQ motif. The sequence is that of Release factor glutamine methyltransferase from Clostridium acetobutylicum (strain ATCC 824 / DSM 792 / JCM 1419 / IAM 19013 / LMG 5710 / NBRC 13948 / NRRL B-527 / VKM B-1787 / 2291 / W).